Consider the following 624-residue polypeptide: DNA-directed RNA polymerase III subunit rpc-3 (624 aa).

Disordered stretches follow at residues 229–260 (KRKL…EEDL) and 373–418 (LAPK…ARMS). Over residues 385-403 (DDSDDDEEDGDYSDSDEEM) the composition is skewed to acidic residues. Residues 551-572 (CYATMVHCLQVLEVRRQKDKDV) are leucine-zipper.

It belongs to the RNA polymerase beta chain family. In terms of assembly, component of the RNA polymerase III (Pol III) complex consisting of 17 subunits.

The protein localises to the nucleus. DNA-dependent RNA polymerase catalyzes the transcription of DNA into RNA using the four ribonucleoside triphosphates as substrates. Specific core component of RNA polymerase III which synthesizes small RNAs, such as 5S rRNA and tRNAs. In Neurospora crassa (strain ATCC 24698 / 74-OR23-1A / CBS 708.71 / DSM 1257 / FGSC 987), this protein is DNA-directed RNA polymerase III subunit rpc-3 (rpc-82).